Reading from the N-terminus, the 494-residue chain is Apolipoprotein N-acyltransferase (494 aa).

6 consecutive transmembrane segments (helical) span residues 16 to 36 (TVGG…FIWI), 41 to 61 (LWAS…AILL), 62 to 82 (SYRW…IAFS), 133 to 153 (LIWG…FGLG), 173 to 193 (GGLA…IFAF), and 202 to 222 (LFAL…ILLA). The CN hydrolase domain maps to 235–461 (WQTNIPTRQK…EGVGVIDINV (227 aa)). Glutamate 276 (proton acceptor) is an active-site residue. Lysine 325 is an active-site residue. The active-site Nucleophile is the cysteine 373. The helical transmembrane segment at 468 to 488 (YVRWGEIPLISSLLIVLCFIA) threads the bilayer.

It belongs to the CN hydrolase family. Apolipoprotein N-acyltransferase subfamily.

It localises to the cell inner membrane. It carries out the reaction N-terminal S-1,2-diacyl-sn-glyceryl-L-cysteinyl-[lipoprotein] + a glycerophospholipid = N-acyl-S-1,2-diacyl-sn-glyceryl-L-cysteinyl-[lipoprotein] + a 2-acyl-sn-glycero-3-phospholipid + H(+). It functions in the pathway protein modification; lipoprotein biosynthesis (N-acyl transfer). Its function is as follows. Catalyzes the phospholipid dependent N-acylation of the N-terminal cysteine of apolipoprotein, the last step in lipoprotein maturation. The chain is Apolipoprotein N-acyltransferase from Prochlorococcus marinus (strain SARG / CCMP1375 / SS120).